The primary structure comprises 615 residues: Protease 4 (615 aa).

The Cytoplasmic segment spans residues 1–17; sequence MFQVLKFCWKVLCFIRD. The chain crosses the membrane as a helical span at residues 18 to 38; the sequence is LVMNVVFLGFVLLLVAIISFS. Topologically, residues 39–615 are periplasmic; that stretch reads SGGKKSTALT…LYCLNCGKVK (577 aa). Catalysis depends on K201, which acts as the Proton donor/acceptor. The Nucleophile role is filled by S405.

Belongs to the peptidase S49 family. As to quaternary structure, homotetramer.

It localises to the cell inner membrane. Its function is as follows. Digests cleaved signal peptides in vitro, its in vivo function is unknown. This activity is necessary to maintain proper secretion of mature proteins across the membrane. This is Protease 4 (sppA) from Haemophilus influenzae (strain ATCC 51907 / DSM 11121 / KW20 / Rd).